A 348-amino-acid polypeptide reads, in one-letter code: Elongation factor Ts (348 aa).

An involved in Mg(2+) ion dislocation from EF-Tu region spans residues 80-83; the sequence is TDFV.

This sequence belongs to the EF-Ts family.

It localises to the cytoplasm. Associates with the EF-Tu.GDP complex and induces the exchange of GDP to GTP. It remains bound to the aminoacyl-tRNA.EF-Tu.GTP complex up to the GTP hydrolysis stage on the ribosome. The protein is Elongation factor Ts of Streptococcus mutans serotype c (strain ATCC 700610 / UA159).